The chain runs to 861 residues: Cone cGMP-specific 3',5'-cyclic phosphodiesterase subunit alpha' (861 aa).

GAF domains are found at residues 75–224 and 256–433; these read SAEQ…AVAL and DVER…GWSL. 3',5'-cyclic GMP is bound by residues serine 97, asparagine 116, 169–172, and threonine 176; that span reads DKQT. Positions 486 to 819 constitute a PDEase domain; the sequence is EERQLLAILK…VEWKSLAEEY (334 aa). The Proton donor role is filled by histidine 562. The a divalent metal cation site is built by histidine 566, histidine 602, aspartate 603, and aspartate 723. Residues 826–839 show a composition bias toward basic and acidic residues; the sequence is TEEEAGKQEEEASD. The disordered stretch occupies residues 826 to 861; that stretch reads TEEEAGKQEEEASDGKAATDLGGSAEDKKSKTCLML. At cysteine 858 the chain carries Cysteine methyl ester. Residue cysteine 858 is the site of S-geranylgeranyl cysteine attachment. Positions 859–861 are cleaved as a propeptide — removed in mature form; that stretch reads LML.

Belongs to the cyclic nucleotide phosphodiesterase family. Composed of two alpha' subunits that are associated with 3 smaller proteins of 11, 13, and 15 kDa. It depends on a divalent metal cation as a cofactor.

It is found in the cell membrane. The catalysed reaction is 3',5'-cyclic GMP + H2O = GMP + H(+). Its function is as follows. As cone-specific cGMP phosphodiesterase, it plays an essential role in light detection and cone phototransduction by rapidly decreasing intracellular levels of cGMP. This chain is Cone cGMP-specific 3',5'-cyclic phosphodiesterase subunit alpha' (Pde6c), found in Mus musculus (Mouse).